The chain runs to 544 residues: Carboxypeptidase Y homolog A (544 aa).

A signal peptide spans 1–17 (MKSLALALLVGGAIASG). A propeptide spanning residues 18–124 (PQQQVLREPV…RLDTYDLRVK (107 aa)) is cleaved from the precursor. 5 cysteine pairs are disulfide-bonded: Cys-178–Cys-417, Cys-312–Cys-326, Cys-336–Cys-359, Cys-343–Cys-352, and Cys-381–Cys-387. Residue Asn-209 is glycosylated (N-linked (GlcNAc...) asparagine). Ser-265 is a catalytic residue. Asp-456 is a catalytic residue. Residue Asn-506 is glycosylated (N-linked (GlcNAc...) asparagine). His-517 is an active-site residue.

It belongs to the peptidase S10 family.

The protein localises to the vacuole. The enzyme catalyses Release of a C-terminal amino acid with broad specificity.. In terms of biological role, vacuolar carboxypeptidase involved in degradation of small peptides. Digests preferentially peptides containing an aliphatic or hydrophobic residue in P1' position, as well as methionine, leucine or phenylalanine in P1 position of ester substrate. In Ajellomyces capsulatus (strain G186AR / H82 / ATCC MYA-2454 / RMSCC 2432) (Darling's disease fungus), this protein is Carboxypeptidase Y homolog A (CPYA).